Reading from the N-terminus, the 691-residue chain is DNA ligase (691 aa).

NAD(+) contacts are provided by residues 56 to 60, 104 to 105, and Glu-139; these read DRAYD and SI. Residue Lys-141 is the N6-AMP-lysine intermediate of the active site. NAD(+)-binding residues include Arg-162, Glu-198, Lys-314, and Lys-338. Zn(2+) contacts are provided by Cys-429, Cys-432, Cys-445, and Cys-451. The BRCT domain maps to 607–691; sequence TAGDALSGQT…SLLESHGIEI (85 aa).

It belongs to the NAD-dependent DNA ligase family. LigA subfamily. Mg(2+) serves as cofactor. Requires Mn(2+) as cofactor.

It carries out the reaction NAD(+) + (deoxyribonucleotide)n-3'-hydroxyl + 5'-phospho-(deoxyribonucleotide)m = (deoxyribonucleotide)n+m + AMP + beta-nicotinamide D-nucleotide.. Its function is as follows. DNA ligase that catalyzes the formation of phosphodiester linkages between 5'-phosphoryl and 3'-hydroxyl groups in double-stranded DNA using NAD as a coenzyme and as the energy source for the reaction. It is essential for DNA replication and repair of damaged DNA. The polypeptide is DNA ligase (Natronomonas pharaonis (strain ATCC 35678 / DSM 2160 / CIP 103997 / JCM 8858 / NBRC 14720 / NCIMB 2260 / Gabara) (Halobacterium pharaonis)).